A 417-amino-acid chain; its full sequence is Phosphoglycerate kinase 2 (417 aa).

Serine 2 carries the post-translational modification N-acetylserine. Phosphoserine occurs at positions 2 and 4. Residue lysine 11 is modified to N6-acetyllysine. (2R)-3-phosphoglycerate is bound by residues valine 23, aspartate 24, phenylalanine 25, asparagine 26, glutamine 38, and arginine 39. An N6-acetyllysine modification is found at lysine 48. (2R)-3-phosphoglycerate is bound by residues serine 62, histidine 63, glycine 65, and arginine 66. 3 positions are modified to N6-acetyllysine: lysine 75, lysine 86, and lysine 97. (2R)-3-phosphoglycerate contacts are provided by leucine 122 and arginine 123. Residues lysine 131 and lysine 146 each carry the N6-acetyllysine modification. 2 residues coordinate (2R)-3-phosphoglycerate: histidine 170 and arginine 171. Tyrosine 196 bears the Phosphotyrosine mark. N6-acetyllysine is present on lysine 199. Glycine 214 serves as a coordination point for ADP. Glycine 214 contacts CDP. Alanine 215 and lysine 216 together coordinate AMP. Alanine 215 contributes to the ATP binding site. Position 215 (alanine 215) interacts with Mg(2+). Alanine 218 and aspartate 219 together coordinate Mg(2+). Aspartate 219 serves as a coordination point for CDP. Lysine 220 provides a ligand contact to AMP. Residue lysine 220 participates in ATP binding. Glycine 238 contacts ADP. Glycine 238 provides a ligand contact to CDP. An AMP-binding site is contributed by glycine 239. ATP is bound at residue glycine 239. 2 positions are modified to N6-acetyllysine: lysine 267 and lysine 291. An AMP-binding site is contributed by glycine 313. ATP is bound at residue glycine 313. Glycine 338, valine 340, and phenylalanine 343 together coordinate CDP. An ADP-binding site is contributed by phenylalanine 343. Glutamate 344 contacts AMP. ATP contacts are provided by glutamate 344, aspartate 375, and threonine 376. Aspartate 375 contacts Mg(2+).

Belongs to the phosphoglycerate kinase family. In terms of assembly, monomer. Mg(2+) is required as a cofactor.

It is found in the cytoplasm. It carries out the reaction (2R)-3-phosphoglycerate + ATP = (2R)-3-phospho-glyceroyl phosphate + ADP. It functions in the pathway carbohydrate degradation; glycolysis; pyruvate from D-glyceraldehyde 3-phosphate: step 2/5. Functionally, essential for sperm motility and male fertility but is not required for the completion of spermatogenesis. The polypeptide is Phosphoglycerate kinase 2 (PGK2) (Equus caballus (Horse)).